The chain runs to 457 residues: Protein unc-93 homolog A (457 aa).

5 consecutive transmembrane segments (helical) span residues 8 to 28, 42 to 62, 65 to 85, 86 to 106, and 140 to 160; these read VLVV…LQSL, ALST…PLLI, LGCK…SVGN, FFAS…GAAP, and IFFL…SLVF. Asn-190 carries N-linked (GlcNAc...) asparagine glycosylation. 6 helical membrane-spanning segments follow: residues 202–222, 257–277, 291–311, 320–340, 344–364, and 395–415; these read TLLG…AAFL, LCLL…LSSE, FVGY…VLYG, AVLY…LLLW, ADHL…DAVW, and FVIA…YILL.

This sequence belongs to the unc-93 family. In terms of tissue distribution, expressed in testis, small intestine, spleen, prostate and ovary.

The protein resides in the cell membrane. The protein is Protein unc-93 homolog A (UNC93A) of Homo sapiens (Human).